The primary structure comprises 147 residues: Transthyretin (147 aa).

Residues 1 to 20 (MASLRLFLLCLAGLIFASEA) form the signal peptide. At Cys-30 the chain carries Sulfocysteine. Residue Lys-35 participates in L-thyroxine binding. A 4-carboxyglutamate modification is found at Glu-62. Ser-72 is subject to Phosphoserine. An L-thyroxine-binding site is contributed by Glu-74. The N-linked (GlcNAc...) asparagine glycan is linked to Asn-118. L-thyroxine is bound at residue Ser-137.

It belongs to the transthyretin family. As to quaternary structure, homotetramer. Dimer of dimers. In the homotetramer, subunits assemble around a central channel that can accommodate two ligand molecules. Interacts with RBP4. In terms of processing, sulfonation of the reactive cysteine Cys-30 enhances the stability of the native conformation of TTR, avoiding misassembly of the protein leading to amyloid formation. In terms of tissue distribution, detected in serum and cerebrospinal fluid (at protein level). Highly expressed in the choroid plexus. Detected at lower levels in the liver.

The protein localises to the secreted. In terms of biological role, thyroid hormone-binding protein. Probably transports thyroxine from the bloodstream to the brain. This chain is Transthyretin (Ttr), found in Rattus norvegicus (Rat).